Consider the following 534-residue polypeptide: Nucleolar protein 58 (534 aa).

Thr-34 carries the post-translational modification Phosphothreonine. At Ser-109 the chain carries Phosphoserine. Lys-157 participates in a covalent cross-link: Glycyl lysine isopeptide (Lys-Gly) (interchain with G-Cter in SUMO2). Residues Ile-282 to Asp-400 enclose the Nop domain. Phosphoserine is present on residues Ser-304 and Ser-351. Residues Lys-353, Lys-411, Lys-415, Lys-422, Lys-426, Lys-441, Lys-444, and Lys-465 each participate in a glycyl lysine isopeptide (Lys-Gly) (interchain with G-Cter in SUMO2) cross-link. Lys-467 is covalently cross-linked (Glycyl lysine isopeptide (Lys-Gly) (interchain with G-Cter in SUMO); alternate). A Glycyl lysine isopeptide (Lys-Gly) (interchain with G-Cter in SUMO1); alternate cross-link involves residue Lys-467. Lys-467 is covalently cross-linked (Glycyl lysine isopeptide (Lys-Gly) (interchain with G-Cter in SUMO2); alternate). Acidic residues predominate over residues Val-470–Glu-486. Residues Val-470–Asp-534 are disordered. Lys-490 is covalently cross-linked (Glycyl lysine isopeptide (Lys-Gly) (interchain with G-Cter in SUMO2)). A compositionally biased stretch (basic residues) spans Lys-490–His-500. A Glycyl lysine isopeptide (Lys-Gly) (interchain with G-Cter in SUMO); alternate cross-link involves residue Lys-502. Lys-502 participates in a covalent cross-link: Glycyl lysine isopeptide (Lys-Gly) (interchain with G-Cter in SUMO2); alternate. 2 positions are modified to phosphoserine: Ser-507 and Ser-519. Residues Lys-522 to Asp-534 are compositionally biased toward basic residues.

It belongs to the NOP5/NOP56 family. In terms of assembly, core component of box C/D small nucleolar ribonucleoprotein (snoRNP) particles; the core proteins SNU13, NOP56, NOP58 and FBL or FBLL1 assemble stepwise onto the snoRNA. Interacts with NOLC1/Nopp140. Interacts with NOPCHAP1, NUFIP1, RUVBL1 and RUVBL2; NOPCHAP1 bridges the association of NOP58 with RUVBL1:RUVBL2 and NUFIP1. Interacts with PIH1D1. Part of the small subunit (SSU) processome, composed of more than 70 proteins and the RNA chaperone small nucleolar RNA (snoRNA) U3. In terms of processing, sumoylation is essential for high-affinity binding to snoRNAs.

The protein localises to the nucleus. It localises to the nucleolus. The protein resides in the nucleoplasm. Its function is as follows. Required for the biogenesis of box C/D snoRNAs such as U3, U8 and U14 snoRNAs. Part of the small subunit (SSU) processome, first precursor of the small eukaryotic ribosomal subunit. During the assembly of the SSU processome in the nucleolus, many ribosome biogenesis factors, an RNA chaperone and ribosomal proteins associate with the nascent pre-rRNA and work in concert to generate RNA folding, modifications, rearrangements and cleavage as well as targeted degradation of pre-ribosomal RNA by the RNA exosome. Core component of box C/D small nucleolar ribonucleoprotein (snoRNP) complexes that function in methylation of multiple sites on ribosomal RNAs (rRNAs) and messenger RNAs (mRNAs). This Rattus norvegicus (Rat) protein is Nucleolar protein 58 (Nop58).